A 919-amino-acid chain; its full sequence is Transcriptional regulatory protein EDS1 (919 aa).

The tract at residues 1 to 54 is disordered; it reads MSHHVPNLYGTPIRDPHEHKRNSASMGEVNQSVSSRNCERGSEKGTKQRKKASR. Over residues 23 to 36 the composition is skewed to polar residues; that stretch reads SASMGEVNQSVSSR. The segment covering 37-46 has biased composition (basic and acidic residues); sequence NCERGSEKGT. The zn(2)-C6 fungal-type DNA-binding region spans 56–85; it reads CDQCRRKRIKCRFDKHTGVCQGCLEVGEKC. Residues 297 to 338 are disordered; that stretch reads AGCPNKKLGTDGRSDKWDKNSTWKPVYRSSNPSHPSTEKNVS. Residues 304 to 317 are compositionally biased toward basic and acidic residues; sequence LGTDGRSDKWDKNS. The segment covering 318–338 has biased composition (polar residues); the sequence is TWKPVYRSSNPSHPSTEKNVS.

In terms of assembly, binds DNA in a sequence-specific manner.

It localises to the nucleus. In Saccharomyces cerevisiae (strain Lalvin EC1118 / Prise de mousse) (Baker's yeast), this protein is Transcriptional regulatory protein EDS1 (EDS1).